The sequence spans 235 residues: Pro-opiomelanocortin (235 aa).

A signal peptide spans M1–S26. Residue F87 is modified to Phenylalanine amide. The tract at residues G88–E128 is disordered. The span at G112–E128 shows a compositional bias: basic and acidic residues. The residue at position 124 (S124) is an N-acetylserine; in Corticotropin. Valine amide is present on V136. A glycan (N-linked (GlcNAc...) asparagine) is linked at N152. Residue S154 is modified to Phosphoserine. The segment at E169–M209 is disordered. Residues D181–Y205 are compositionally biased toward basic and acidic residues.

This sequence belongs to the POMC family. Specific enzymatic cleavages at paired basic residues yield the different active peptides. ACTH and MSH are produced by the pituitary gland.

It localises to the secreted. Functionally, stimulates the adrenal glands to release cortisol. Its function is as follows. Anorexigenic peptide. Increases the pigmentation of skin by increasing melanin production in melanocytes. Increases the pigmentation of skin by increasing melanin production in melanocytes. In terms of biological role, endogenous orexigenic opiate. Functionally, endogenous opiate. This Rattus norvegicus (Rat) protein is Pro-opiomelanocortin (Pomc).